A 532-amino-acid polypeptide reads, in one-letter code: Pentatricopeptide repeat-containing protein At5g66500, mitochondrial (532 aa).

The N-terminal 33 residues, 1 to 33, are a transit peptide targeting the mitochondrion; sequence MFACLRIGRFIRLGNVTVKSTNLVLRCVFIRNF. PPR repeat units follow at residues 48-82, 83-117, 118-148, 149-183, 184-218, 223-248, 250-280, 281-314, 315-345, 346-380, 383-413, and 419-453; these read DLSS…SPDL, SSHT…GAET, GTIS…VEEK, DLVS…RVEI, SEFT…GRDL, TAMI…LNVH, DEVM…QRPN, VRVL…GFVS, DSKL…IPSK, SVVS…GSGV, NSVT…MKEK, and GTEH…DNQS. The interval 458–532 is type E motif; degenerate; sequence IWVAVLSACS…VKTAGHSLFI (75 aa).

Belongs to the PPR family. PCMP-E subfamily.

The protein localises to the mitochondrion. The sequence is that of Pentatricopeptide repeat-containing protein At5g66500, mitochondrial (PCMP-E38) from Arabidopsis thaliana (Mouse-ear cress).